Consider the following 852-residue polypeptide: Beta-galactosidase 8 (852 aa).

The signal sequence occupies residues 1 to 29 (MEIAAKMVKVRKMEMILLLILVIVVAATA). An N-linked (GlcNAc...) asparagine glycan is attached at N31. Catalysis depends on E188, which acts as the Proton donor. The active-site Nucleophile is the E257. N-linked (GlcNAc...) asparagine glycosylation is found at N258, N475, N766, and N807. The 87-residue stretch at 766 to 852 (NRTRPVLSLK…KSLAVEASCS (87 aa)) folds into the SUEL-type lectin domain.

Belongs to the glycosyl hydrolase 35 family. Expressed in roots, flowers and siliques.

Its subcellular location is the secreted. The protein localises to the extracellular space. It localises to the apoplast. It catalyses the reaction Hydrolysis of terminal non-reducing beta-D-galactose residues in beta-D-galactosides.. This Arabidopsis thaliana (Mouse-ear cress) protein is Beta-galactosidase 8 (BGAL8).